The following is a 968-amino-acid chain: Sorting nexin-13 (968 aa).

A PXA domain is found at 97-284 (ANIIDEPLQQ…YVIWMIRDSN (188 aa)). In terms of domain architecture, RGS spans 373–496 (PLDSILVDNV…RKVYELMLRD (124 aa)). The 122-residue stretch at 570 to 691 (YADYDPYAVA…DFLENKAYSK (122 aa)) folds into the PX domain. Residues R612, S614, K639, and R653 each coordinate a 1,2-diacyl-sn-glycero-3-phospho-(1D-myo-inositol-3-phosphate).

The protein belongs to the sorting nexin family.

The protein localises to the early endosome membrane. In terms of biological role, may be involved in several stages of intracellular trafficking. May play a role in endosome homeostasis. Acts as a GAP for Galphas. This is Sorting nexin-13 (SNX13) from Homo sapiens (Human).